The sequence spans 339 residues: Cytochrome c biogenesis protein CcsA (339 aa).

Helical transmembrane passes span 6–26 (LEHILAHISFFLPFLATLVFW), 37–57 (IGSLGNKSIIIAYICITGLLL), 71–91 (LYESFMFLSWSFCLIHIVSEI), 97–117 (WLGIIIVLIAMLTHGFATVGL), 142–162 (MMIPSYATLPCGSLLVIALLI), 247–267 (IISLGSLFLTIGILSGAVWVN), and 281–299 (TWALITWLLSAIHIHIRMI).

It belongs to the CcmF/CycK/Ccl1/NrfE/CcsA family. May interact with Ccs1.

It localises to the plastid. The protein localises to the chloroplast thylakoid membrane. Its function is as follows. Required during biogenesis of c-type cytochromes (cytochrome c6 and cytochrome f) at the step of heme attachment. The sequence is that of Cytochrome c biogenesis protein CcsA from Anthoceros angustus (Hornwort).